A 475-amino-acid chain; its full sequence is tRNA modification GTPase MnmE (475 aa).

The (6S)-5-formyl-5,6,7,8-tetrahydrofolate site is built by Arg-32, Glu-97, and Lys-136. In terms of domain architecture, TrmE-type G spans 232–396 (GVATVIAGRP…LKSRMSSMVE (165 aa)). Residues 242-247 (NAGKST), 261-267 (SHMPGTT), 286-289 (DTAG), and 377-379 (SAR) each bind GTP. Positions 246 and 267 each coordinate Mg(2+). Lys-475 is a binding site for (6S)-5-formyl-5,6,7,8-tetrahydrofolate.

This sequence belongs to the TRAFAC class TrmE-Era-EngA-EngB-Septin-like GTPase superfamily. TrmE GTPase family. In terms of assembly, homodimer. Heterotetramer of two MnmE and two MnmG subunits. Requires K(+) as cofactor.

It is found in the cytoplasm. Exhibits a very high intrinsic GTPase hydrolysis rate. Involved in the addition of a carboxymethylaminomethyl (cmnm) group at the wobble position (U34) of certain tRNAs, forming tRNA-cmnm(5)s(2)U34. This is tRNA modification GTPase MnmE from Chlorobium phaeobacteroides (strain DSM 266 / SMG 266 / 2430).